The sequence spans 292 residues: Elongation factor Ts (292 aa).

The segment at 79–82 (TDFV) is involved in Mg(2+) ion dislocation from EF-Tu.

This sequence belongs to the EF-Ts family.

The protein localises to the cytoplasm. Functionally, associates with the EF-Tu.GDP complex and induces the exchange of GDP to GTP. It remains bound to the aminoacyl-tRNA.EF-Tu.GTP complex up to the GTP hydrolysis stage on the ribosome. The chain is Elongation factor Ts from Xylella fastidiosa (strain Temecula1 / ATCC 700964).